The primary structure comprises 609 residues: MRLLLSIAGLTTVVNALAVRADGNVTSSTAVATPTAWTGFPVPTEYTLPQDDHDFQERKEEIKLKRDTITYVPSIIGETSLFIGGSVGTQIVRQEQAKWIQDLTPVQQDAFREGNASLKAIQDHGGLKTLEDYKILYDGHWSGSVPGGIAQGQFNNFTSDLLFAMERLSTNPYVVRRLNPESDKIPFSVDANNVTHLTGTTLDTLFKSGSLFLADHSYQAEYTAQDGRYSAACQALFFLDQRSGQFLPLAIKTNVGSDLVYTPLDDPNDWLLAKIMYNVNDFFHGQIYHLANSHAVAEIVNLAAIRTLSSRHPVFGLLQRLMFQAYAIRATGEIALFNPGGLFDQSFAFSNVYARKFATDFYPTVAGPFQANYFEEDLRARGLLNASYGPELPHLPFHEDGHKIINAIRTFIGTFVDTVYESDKVLAEDSELQAWIAEANGPAKVINFPSAPLNTRKQLAEILTHMAWLTGVSHHVLNQGEPFTTSGVLPLHPASLYAPVPTAKGGIKDLLPWLPNEQKSVEQISLLARFNRPKIVENNETLLHMFDVKTLLSGTGEAVKAANEQFMIAMGTISKEISTRKFDDQGLSQGMPFIWTGMDPGVIPFYLSV.

Residues 1 to 16 (MRLLLSIAGLTTVVNA) form the signal peptide. Residues Asn-24, Asn-115, Asn-156, and Asn-193 are each glycosylated (N-linked (GlcNAc...) asparagine). The region spanning 117-609 (SLKAIQDHGG…PGVIPFYLSV (493 aa)) is the Lipoxygenase domain. Residues His-289 and His-294 each coordinate Mn(2+). N-linked (GlcNAc...) asparagine glycosylation occurs at Asn-385. His-474 and Asn-478 together coordinate Mn(2+). Residue Asn-539 is glycosylated (N-linked (GlcNAc...) asparagine). Val-609 is a binding site for Mn(2+).

The protein belongs to the lipoxygenase family. Manganese lipoxygenase subfamily. The cofactor is Mn(2+). In terms of processing, N- and O-glycosylated.

Its subcellular location is the secreted. The catalysed reaction is (9Z,12Z)-octadecadienoate + O2 = (9S)-hydroperoxy-(10E,12Z)-octadecadienoate. It catalyses the reaction (9Z,12Z)-octadecadienoate + O2 = (11S)-hydroperoxy-(9Z,12Z)-octadecadienoate. It carries out the reaction (9Z,12Z)-octadecadienoate + O2 = (13R)-hydroperoxy-(9Z,11E)-octadecadienoate. The enzyme catalyses (9Z,12Z,15Z)-octadecatrienoate + O2 = (11R)-hydroperoxy-(9Z,12Z,15Z)-octadecatrienoate. Functionally, lipoxygenase that metabolizes linoleic and alpha-linolenic acids to 9-, 11- and 13-hydroperoxy fatty acids. Oxidizes linoleic acid to mainly 9S- and 13R-HPODE and alpha-linolenic acid to 11R-HPOTrE. The protein is Manganese lipoxygenase of Colletotrichum gloeosporioides (strain Cg-14) (Anthracnose fungus).